Reading from the N-terminus, the 159-residue chain is tRNA-specific adenosine deaminase (159 aa).

The CMP/dCMP-type deaminase domain occupies 6–133 (EEQTYFMQEA…ERLNHRVQVE (128 aa)). Zn(2+) is bound at residue His-57. Catalysis depends on Glu-59, which acts as the Proton donor. Residues Cys-87 and Cys-90 each contribute to the Zn(2+) site.

It belongs to the cytidine and deoxycytidylate deaminase family. Homodimer. It depends on Zn(2+) as a cofactor.

The catalysed reaction is adenosine(34) in tRNA + H2O + H(+) = inosine(34) in tRNA + NH4(+). Functionally, catalyzes the deamination of adenosine to inosine at the wobble position 34 of tRNA(Arg2). The sequence is that of tRNA-specific adenosine deaminase from Streptococcus pyogenes serotype M18 (strain MGAS8232).